The primary structure comprises 460 residues: A-type ATP synthase subunit B (460 aa).

It belongs to the ATPase alpha/beta chains family. Has multiple subunits, A(3), B(3), C, D, E, F, G, I and K(x); there may be a few other subunits as well.

It is found in the cell membrane. Functionally, component of the A-type ATP synthase that produces ATP from ADP in the presence of a proton gradient across the membrane. The B chain is a regulatory subunit. The polypeptide is A-type ATP synthase subunit B (Methanosarcina mazei (strain ATCC BAA-159 / DSM 3647 / Goe1 / Go1 / JCM 11833 / OCM 88) (Methanosarcina frisia)).